Here is a 561-residue protein sequence, read N- to C-terminus: PR domain zinc finger protein 14 (561 aa).

The tract at residues 1 to 20 (MALPPSGETQSQDKANYLPQ) is disordered. The segment covering 7–20 (GETQSQDKANYLPQ) has biased composition (polar residues). The interaction with CBFA2T2 stretch occupies residues 184 to 373 (GFNFTEEELS…GVPMNLRVTE (190 aa)). The region spanning 241 to 356 (EGLCLMQTSF…RNQELLVWYG (116 aa)) is the SET domain. Residue tyrosine 355 participates in S-adenosyl-L-methionine binding. A C2H2-type 1; atypical zinc finger spans residues 390–416 (YRCERCGKVFTYKYYRDKHLKYTPCVD). 5 C2H2-type zinc fingers span residues 422 to 445 (FPCSLCQRSFEKRDRLRIHILHVH), 451 to 473 (YLCSTCGKSFSQSSSLNKHMRVH), 479 to 501 (YQCVYCTKKFTASSILRTHIRQH), 507 to 530 (FKCKHCGKAFASHAAHDSHVRRSH), and 536 to 558 (SSCDICGKGFLDQEAFYAHMRLH).

It belongs to the class V-like SAM-binding methyltransferase superfamily. Interacts with CBFA2T2. Restricted to embryonic stem cells and primordial germ cells. Not detected in epiblast-derived stem cells.

The protein localises to the nucleus. Its function is as follows. Transcription factor that has both positive and negative roles on transcription. Plays a role in cellular pluripotency. Essential for germ cell development at 2 levels: the reacquisition of potential pluripotency, including SOX2 up-regulation, and successful epigenetic reprogramming, characterized by EHMT1 repression. Its association with CBFA2T2 is required for the functions in pluripotency and germ cell formation. The sequence is that of PR domain zinc finger protein 14 (Prdm14) from Mus musculus (Mouse).